The chain runs to 391 residues: Processive diacylglycerol beta-glucosyltransferase (391 aa).

Belongs to the glycosyltransferase 28 family. UgtP subfamily.

The protein localises to the cell membrane. It carries out the reaction a 1,2-diacyl-3-O-(beta-D-glucopyranosyl)-sn-glycerol + UDP-alpha-D-glucose = a 1,2-diacyl-3-O-(beta-D-Glc-(1-&gt;6)-beta-D-Glc)-sn-glycerol + UDP + H(+). The enzyme catalyses a 1,2-diacyl-sn-glycerol + UDP-alpha-D-glucose = a 1,2-diacyl-3-O-(beta-D-glucopyranosyl)-sn-glycerol + UDP + H(+). It functions in the pathway glycolipid metabolism; diglucosyl-diacylglycerol biosynthesis. In terms of biological role, processive glucosyltransferase involved in the biosynthesis of both the bilayer- and non-bilayer-forming membrane glucolipids. Is able to successively transfer two glucosyl residues to diacylglycerol (DAG), thereby catalyzing the formation of beta-monoglucosyl-DAG (3-O-(beta-D-glucopyranosyl)-1,2-diacyl-sn-glycerol) and beta-diglucosyl-DAG (3-O-(beta-D-glucopyranosyl-beta-(1-&gt;6)-D-glucopyranosyl)-1,2-diacyl-sn-glycerol). Beta-diglucosyl-DAG is the predominant glycolipid found in Bacillales and is also used as a membrane anchor for lipoteichoic acid (LTA). The chain is Processive diacylglycerol beta-glucosyltransferase from Staphylococcus saprophyticus subsp. saprophyticus (strain ATCC 15305 / DSM 20229 / NCIMB 8711 / NCTC 7292 / S-41).